The chain runs to 316 residues: MEETNNSSEKGFLLLGFSDQPQLERFLFAIILYFYVLSLLGNTALILVCCLDSRLHTPMYFFLSNLSCVDICFTTSVAPQLLVTMNKKDKTMSYGGCVAQLYVAMGLGSSECILLAVMAYDRYAAVCRPLRYIAIMHPRFCASLAGGAWLSGLITSLIQCSLTVQLPLCGHRTLDHIFCEVPVLIKLACVDTTFNEAELFVASVVFLIVPVLLILVSYGFITQAVLRIKSAAGRQKAFGTCSSHLVVVIIFYGTIIFMYLQPANRRSKNQGKFVSLFYTIVTPLLNPIIYTLRNKDVKGALRTLILGSAAGQSHKD.

At 1–25 the chain is on the extracellular side; it reads MEETNNSSEKGFLLLGFSDQPQLER. 2 N-linked (GlcNAc...) asparagine glycosylation sites follow: asparagine 5 and asparagine 6. The chain crosses the membrane as a helical span at residues 26-49; that stretch reads FLFAIILYFYVLSLLGNTALILVC. Topologically, residues 50–57 are cytoplasmic; sequence CLDSRLHT. Residues 58-79 traverse the membrane as a helical segment; that stretch reads PMYFFLSNLSCVDICFTTSVAP. The Extracellular segment spans residues 80–100; that stretch reads QLLVTMNKKDKTMSYGGCVAQ. A disulfide bond links cysteine 97 and cysteine 189. Residues 101–120 traverse the membrane as a helical segment; that stretch reads LYVAMGLGSSECILLAVMAY. The Cytoplasmic segment spans residues 121 to 139; that stretch reads DRYAAVCRPLRYIAIMHPR. Residues 140 to 158 traverse the membrane as a helical segment; sequence FCASLAGGAWLSGLITSLI. The Extracellular segment spans residues 159–195; sequence QCSLTVQLPLCGHRTLDHIFCEVPVLIKLACVDTTFN. The helical transmembrane segment at 196 to 219 threads the bilayer; it reads EAELFVASVVFLIVPVLLILVSYG. At 220-236 the chain is on the cytoplasmic side; sequence FITQAVLRIKSAAGRQK. The chain crosses the membrane as a helical span at residues 237–259; it reads AFGTCSSHLVVVIIFYGTIIFMY. Topologically, residues 260–272 are extracellular; sequence LQPANRRSKNQGK. The helical transmembrane segment at 273-292 threads the bilayer; the sequence is FVSLFYTIVTPLLNPIIYTL. Residues 293-316 are Cytoplasmic-facing; the sequence is RNKDVKGALRTLILGSAAGQSHKD.

Belongs to the G-protein coupled receptor 1 family.

The protein localises to the cell membrane. In terms of biological role, odorant receptor. In Homo sapiens (Human), this protein is Olfactory receptor 2G6 (OR2G6).